Consider the following 304-residue polypeptide: uncharacterized protein (304 aa).

The signal sequence occupies residues 1–22 (MKKSLTLLILLLCSLLFSTVLS). The segment at 91–111 (PAPAPTPESSDPDEPMKPDDS) is disordered. N133, N160, N183, and N233 each carry an N-linked (GlcNAc...) asparagine glycan. Residue S282 is the site of GPI-anchor amidated serine attachment. Positions 283–304 (SSHLFGVLPFLPLVLCIFLFLL) are cleaved as a propeptide — removed in mature form.

The protein resides in the cell membrane. This is an uncharacterized protein from Arabidopsis thaliana (Mouse-ear cress).